The following is a 232-amino-acid chain: ATP synthase subunit a (232 aa).

6 helical membrane-spanning segments follow: residues 18-38 (LLFI…IAFI), 74-94 (WAGL…LGLF), 107-127 (TYSL…YLAF), 142-162 (ALIP…PIAL), 173-193 (GHLL…SLMV), and 195-215 (SIPI…VACI).

This sequence belongs to the ATPase A chain family. As to quaternary structure, F-type ATPases have 2 components, CF(1) - the catalytic core - and CF(0) - the membrane proton channel. CF(1) has five subunits: alpha(3), beta(3), gamma(1), delta(1), epsilon(1). CF(0) has three main subunits: a, b and c.

It is found in the mitochondrion inner membrane. Functionally, mitochondrial membrane ATP synthase (F(1)F(0) ATP synthase or Complex V) produces ATP from ADP in the presence of a proton gradient across the membrane which is generated by electron transport complexes of the respiratory chain. F-type ATPases consist of two structural domains, F(1) - containing the extramembraneous catalytic core and F(0) - containing the membrane proton channel, linked together by a central stalk and a peripheral stalk. During catalysis, ATP synthesis in the catalytic domain of F(1) is coupled via a rotary mechanism of the central stalk subunits to proton translocation. Key component of the proton channel; it may play a direct role in the translocation of protons across the membrane. The chain is ATP synthase subunit a (ATP6) from Paracentrotus lividus (Common sea urchin).